Here is a 425-residue protein sequence, read N- to C-terminus: CinA-like protein (425 aa).

The protein belongs to the CinA family.

The polypeptide is CinA-like protein (Mycobacterium marinum (strain ATCC BAA-535 / M)).